Reading from the N-terminus, the 144-residue chain is Putative protein PHLOEM PROTEIN 2-LIKE B4 (144 aa).

The protein is Putative protein PHLOEM PROTEIN 2-LIKE B4 (PP2B4) of Arabidopsis thaliana (Mouse-ear cress).